Here is a 332-residue protein sequence, read N- to C-terminus: Fructose-1,6-bisphosphatase class 1 (332 aa).

The Mg(2+) site is built by Glu-89, Asp-110, Leu-112, and Asp-113. Residues 113–116, Asn-206, Tyr-239, 257–259, and Lys-269 each bind substrate; these read DGSS and YLY. Glu-275 is a Mg(2+) binding site.

The protein belongs to the FBPase class 1 family. As to quaternary structure, homotetramer. Requires Mg(2+) as cofactor.

It localises to the cytoplasm. The enzyme catalyses beta-D-fructose 1,6-bisphosphate + H2O = beta-D-fructose 6-phosphate + phosphate. Its pathway is carbohydrate biosynthesis; gluconeogenesis. In Escherichia coli (strain ATCC 8739 / DSM 1576 / NBRC 3972 / NCIMB 8545 / WDCM 00012 / Crooks), this protein is Fructose-1,6-bisphosphatase class 1.